The sequence spans 555 residues: Phosphoglucomutase (555 aa).

Residues T45, R49, 148 to 149 (SH), and K158 contribute to the substrate site. The active-site Phosphoserine intermediate is the S148. S148 contacts Mg(2+). Residues D306, D308, and D310 each coordinate Mg(2+). Substrate contacts are provided by residues 310–311 (DR) and 393–395 (EES).

Belongs to the phosphohexose mutase family. The cofactor is Mg(2+).

It catalyses the reaction alpha-D-glucose 1-phosphate = alpha-D-glucose 6-phosphate. In terms of biological role, this enzyme participates in both the breakdown and synthesis of glucose. This Komagataeibacter xylinus (Gluconacetobacter xylinus) protein is Phosphoglucomutase (celB).